The sequence spans 482 residues: Probable 2-carboxy-D-arabinitol-1-phosphatase (482 aa).

The N-terminal 34 residues, 1 to 34 (MISLPLTTPILPSRCLLHKTRRQNSTRRRLLIRS), are a transit peptide targeting the chloroplast. The active-site Tele-phosphohistidine intermediate is histidine 55. The active-site Proton donor/acceptor is the glutamate 129.

The protein belongs to the phosphoglycerate mutase family.

The protein localises to the plastid. The protein resides in the chloroplast stroma. The catalysed reaction is 2-carboxy-D-arabinitol 1-phosphate + H2O = 2-carboxy-D-arabinitol + phosphate. Phosphoglycerate mutase-like protein lacking PGM activity, but having 2-carboxy-D-arabinitol 1-phosphate (CA1P) phosphatase activity. Prevents the accumulation of D-glycero-2,3-pentodiulose-1,5-bisphosphate (PDBP) a potent inhibitor of ribulose-1,5-bisphosphate carboxylase (RuBisCO). PDBP is produced during the oxidation of ribulose-1,5-bisphosphate, the substrate of RuBisCO. This Arabidopsis thaliana (Mouse-ear cress) protein is Probable 2-carboxy-D-arabinitol-1-phosphatase.